Reading from the N-terminus, the 333-residue chain is D-fructose 1,6-bisphosphatase class 2/sedoheptulose 1,7-bisphosphatase (333 aa).

Mn(2+)-binding residues include Asp33, Glu57, Asp85, and Glu88. Residues 88–90 (EGT), Tyr119, 164–166 (RTR), and 186–188 (DGD) contribute to the substrate site. Glu213 lines the Mn(2+) pocket.

It belongs to the FBPase class 2 family. Homotetramer. Mn(2+) serves as cofactor.

The catalysed reaction is beta-D-fructose 1,6-bisphosphate + H2O = beta-D-fructose 6-phosphate + phosphate. The enzyme catalyses D-sedoheptulose 1,7-bisphosphate + H2O = D-sedoheptulose 7-phosphate + phosphate. Its pathway is carbohydrate biosynthesis; Calvin cycle. Functionally, catalyzes the hydrolysis of fructose 1,6-bisphosphate (Fru 1,6-P2) and sedoheptulose 1,7-bisphosphate (Sed 1,7-P2) to fructose 6-phosphate and sedoheptulose 7-phosphate, respectively. This chain is D-fructose 1,6-bisphosphatase class 2/sedoheptulose 1,7-bisphosphatase, found in Prochlorococcus marinus (strain AS9601).